Here is a 320-residue protein sequence, read N- to C-terminus: 3-ketodihydrosphingosine reductase TSC10 (320 aa).

The Cytoplasmic segment spans residues 1–254 (MKFTLEDQVV…IIAKSLARGD (254 aa)). Residue Leu11 participates in NADP(+) binding. NADPH-binding residues include Gly14, Ser16, and Gly18. The GXSXG signature appears at 14-18 (GGSQG). Residue Leu19 coordinates NADP(+). NADPH contacts are provided by Arg41, Arg45, Asp89, and Leu90. Position 89 (Asp89) interacts with NADP(+). Catalysis depends on Ser166, which acts as the Proton donor. Positions 180, 184, and 213 each coordinate NADP(+). The active-site Proton acceptor is Tyr180. The active-site Lowers pKa of active site Tyr is Lys184. Residues 255–275 (DDVFTDFVGWMIMGMDLGLTA) traverse the membrane as a helical segment. Residues 276–279 (KKSR) lie on the Lumenal side of the membrane. Residues 280-300 (FVPLQWIFGVLSNILVVPFYM) form a helical membrane-spanning segment. The Cytoplasmic portion of the chain corresponds to 301-320 (VGCSWYIRKWFRENDGKKAN).

The protein belongs to the short-chain dehydrogenases/reductases (SDR) family. In terms of assembly, dimer or tetramer.

It is found in the endoplasmic reticulum membrane. It catalyses the reaction sphinganine + NADP(+) = 3-oxosphinganine + NADPH + H(+). It participates in lipid metabolism; sphingolipid metabolism. Functionally, catalyzes the reduction of 3'-oxosphinganine (3-ketodihydrosphingosine/KDS) to sphinganine (dihydrosphingosine/DHS), the second step of de novo sphingolipid biosynthesis. The chain is 3-ketodihydrosphingosine reductase TSC10 from Saccharomyces cerevisiae (strain ATCC 204508 / S288c) (Baker's yeast).